The sequence spans 358 residues: Ganglioside-induced differentiation-associated protein 1 (358 aa).

The 82-residue stretch at 24–105 (VKLILYHWTH…YLEQTFLDER (82 aa)) folds into the GST N-terminal domain. Residues lysine 50, lysine 172, lysine 173, lysine 188, and lysine 190 each participate in a glycyl lysine isopeptide (Lys-Gly) (interchain with G-Cter in ubiquitin) cross-link. The GST C-terminal domain occupies 153–309 (PAYATTRIRS…LISAVLPTAF (157 aa)). Lysine 203 is modified (N6-acetyllysine; alternate). Lysine 203 is covalently cross-linked (Glycyl lysine isopeptide (Lys-Gly) (interchain with G-Cter in ubiquitin); alternate). Residues lysine 206, lysine 207, and lysine 214 each participate in a glycyl lysine isopeptide (Lys-Gly) (interchain with G-Cter in ubiquitin) cross-link. The next 2 helical transmembrane spans lie at 292–312 (VLGH…FRVA) and 320–340 (LGTT…FMLF). The interval 320–358 (LGTTLVVGLLAGVGYFAFMLFRKRLGSMILAFRPRPNYF) is required for mitochondrial localization.

Belongs to the GST superfamily. Homodimer. Post-translationally, ubiquitinated by PRKN during mitophagy, leading to its degradation and enhancement of mitophagy. Deubiquitinated by USP30. As to expression, highly expressed in whole brain and spinal cord. Predominant expression in central tissues of the nervous system not only in neurons but also in Schwann cells.

It localises to the mitochondrion outer membrane. Its subcellular location is the cytoplasm. Its function is as follows. Regulates the mitochondrial network by promoting mitochondrial fission. This Homo sapiens (Human) protein is Ganglioside-induced differentiation-associated protein 1 (GDAP1).